Here is a 560-residue protein sequence, read N- to C-terminus: Cytosolic purine 5'-nucleotidase (560 aa).

Asp-52 acts as the Nucleophile in catalysis. IMP-binding residues include Asp-52 and Asp-54. The Mg(2+) site is built by Asp-52 and Asp-54. The active-site Proton donor is the Asp-54. The ATP site is built by Arg-144 and Asn-154. IMP is bound by residues Arg-202, Asp-206, Lys-215, Thr-249, Asn-250, Ser-251, and Lys-292. Residue Asp-351 coordinates Mg(2+). Ser-418 is subject to Phosphoserine. Residues Gln-453 and Arg-456 each coordinate ATP. Ser-502, Ser-511, and Ser-527 each carry phosphoserine. The disordered stretch occupies residues 541–560 (PQEITHCHDEDDDEEEEEEE). The required for tetramer assembly stretch occupies residues 548 to 560 (HDEDDDEEEEEEE). Positions 550-560 (EDDDEEEEEEE) are enriched in acidic residues.

Belongs to the 5'(3')-deoxyribonucleotidase family. Homotetramer. The cofactor is Mg(2+).

It is found in the cytoplasm. The protein localises to the cytosol. It catalyses the reaction a ribonucleoside 5'-phosphate + H2O = a ribonucleoside + phosphate. It carries out the reaction a 2'-deoxyribonucleoside + a ribonucleoside 5'-phosphate = a ribonucleoside + a 2'-deoxyribonucleoside 5'-phosphate. The enzyme catalyses IMP + H2O = inosine + phosphate. The catalysed reaction is GMP + H2O = guanosine + phosphate. It catalyses the reaction dIMP + H2O = 2'-deoxyinosine + phosphate. It carries out the reaction dGMP + H2O = 2'-deoxyguanosine + phosphate. The enzyme catalyses XMP + H2O = xanthosine + phosphate. The catalysed reaction is inosine + GMP = guanosine + IMP. It catalyses the reaction dGMP + inosine = 2'-deoxyguanosine + IMP. It carries out the reaction dIMP + inosine = 2'-deoxyinosine + IMP. The enzyme catalyses inosine + UMP = uridine + IMP. The catalysed reaction is inosine + CMP = cytidine + IMP. It catalyses the reaction inosine + AMP = IMP + adenosine. With respect to regulation, allosterically activated by various compounds including ATP, 2,3-BPG/2,3-Bisphosphoglyceric acid and Ap4A/P1,P4-bis(5'-adenosyl) tetraphosphate. Binding of an allosteric activator is a prerequisiste to magnesium and substrate binding. Inhibited by inorganic phosphate. Functionally, broad specificity cytosolic 5'-nucleotidase that catalyzes the dephosphorylation of 6-hydroxypurine nucleoside 5'-monophosphates. In addition, possesses a phosphotransferase activity by which it can transfer a phosphate from a donor nucleoside monophosphate to an acceptor nucleoside, preferably inosine, deoxyinosine and guanosine. Has the highest activities for IMP and GMP followed by dIMP, dGMP and XMP. Could also catalyze the transfer of phosphates from pyrimidine monophosphates but with lower efficiency. Through these activities regulates the purine nucleoside/nucleotide pools within the cell. The polypeptide is Cytosolic purine 5'-nucleotidase (Bos taurus (Bovine)).